Consider the following 404-residue polypeptide: Phosphopentomutase (404 aa).

Mn(2+) is bound by residues aspartate 10, aspartate 303, histidine 308, aspartate 344, histidine 345, and histidine 356.

It belongs to the phosphopentomutase family. It depends on Mn(2+) as a cofactor.

Its subcellular location is the cytoplasm. It catalyses the reaction 2-deoxy-alpha-D-ribose 1-phosphate = 2-deoxy-D-ribose 5-phosphate. The enzyme catalyses alpha-D-ribose 1-phosphate = D-ribose 5-phosphate. It participates in carbohydrate degradation; 2-deoxy-D-ribose 1-phosphate degradation; D-glyceraldehyde 3-phosphate and acetaldehyde from 2-deoxy-alpha-D-ribose 1-phosphate: step 1/2. Isomerase that catalyzes the conversion of deoxy-ribose 1-phosphate (dRib-1-P) and ribose 1-phosphate (Rib-1-P) to deoxy-ribose 5-phosphate (dRib-5-P) and ribose 5-phosphate (Rib-5-P), respectively. The chain is Phosphopentomutase from Shewanella baltica (strain OS155 / ATCC BAA-1091).